The following is a 448-amino-acid chain: Tryptophan dimethylallyltransferase 1 (448 aa).

L-tryptophan-binding positions include 80–81 (IL) and E89. 3 residues coordinate substrate: R100, K186, and Y188. L-tryptophan is bound by residues Y190 and R249. R262, K264, Y266, Q348, Y350, Y414, and Y418 together coordinate substrate.

It belongs to the tryptophan dimethylallyltransferase family. As to quaternary structure, homodimer.

The catalysed reaction is L-tryptophan + dimethylallyl diphosphate = 4-(3-methylbut-2-enyl)-L-tryptophan + diphosphate. It functions in the pathway alkaloid biosynthesis; ergot alkaloid biosynthesis. In terms of biological role, tryptophan dimethylallyltransferase; part of the gene cluster that mediates the biosynthesis of fungal ergot alkaloid. DmaW catalyzes the first step of ergot alkaloid biosynthesis by condensing dimethylallyl diphosphate (DMAP) and tryptophan to form 4-dimethylallyl-L-tryptophan. The second step is catalyzed by the methyltransferase easF that methylates 4-dimethylallyl-L-tryptophan in the presence of S-adenosyl-L-methionine, resulting in the formation of 4-dimethylallyl-L-abrine. The catalase easC and the FAD-dependent oxidoreductase easE then transform 4-dimethylallyl-L-abrine to chanoclavine-I which is further oxidized by easD in the presence of NAD(+), resulting in the formation of chanoclavine-I aldehyde. Agroclavine dehydrogenase easG then mediates the conversion of chanoclavine-I aldehyde to agroclavine via a non-enzymatic adduct reaction: the substrate is an iminium intermediate that is formed spontaneously from chanoclavine-I aldehyde in the presence of glutathione. The presence of easA is not required to complete this reaction. Further conversion of agroclavine to paspalic acid is a two-step process involving oxidation of agroclavine to elymoclavine and of elymoclavine to paspalic acid, the second step being performed by the elymoclavine oxidase cloA. Paspalic acid is then further converted to D-lysergic acid. Ergopeptines are assembled from D-lysergic acid and three different amino acids by the D-lysergyl-peptide-synthetases composed each of a monomudular and a trimodular nonribosomal peptide synthetase subunit. LpsB and lpsC encode the monomodular subunits responsible for D-lysergic acid activation and incorporation into the ergopeptine backbone. LpsA1 and A2 subunits encode the trimodular nonribosomal peptide synthetase assembling the tripeptide portion of ergopeptines. LpsA1 is responsible for formation of the major ergopeptine, ergotamine, and lpsA2 for alpha-ergocryptine, the minor ergopeptine of the total alkaloid mixture elaborated by C.purpurea. D-lysergyl-tripeptides are assembled by the nonribosomal peptide synthetases and released as N-(D-lysergyl-aminoacyl)-lactams. Cyclolization of the D-lysergyl-tripeptides is performed by the Fe(2+)/2-ketoglutarate-dependent dioxygenase easH which introduces a hydroxyl group into N-(D-lysergyl-aminoacyl)-lactam at alpha-C of the aminoacyl residue followed by spontaneous condensation with the terminal lactam carbonyl group. The chain is Tryptophan dimethylallyltransferase 1 from Claviceps purpurea (strain 20.1) (Ergot fungus).